Consider the following 234-residue polypeptide: Sperm-associated microtubule inner protein 5 (234 aa).

In terms of assembly, microtubule inner protein component of sperm flagellar doublet microtubules. Expressed in testis (at protein level). Strongly expressed in peritubular cells and Leydig cells and weakly expressed in the cytoplasm of spermatocytes.

The protein localises to the cytoplasm. The protein resides in the cytoskeleton. It localises to the flagellum axoneme. Its subcellular location is the nucleus. Its function is as follows. Microtubule inner protein (MIP) part of the dynein-decorated doublet microtubules (DMTs) in flagellum axoneme. May serve to reinforce and thus stabilize the microtubule structure in the sperm flagella. This Homo sapiens (Human) protein is Sperm-associated microtubule inner protein 5.